Consider the following 275-residue polypeptide: NH(3)-dependent NAD(+) synthetase (275 aa).

Residue 47–54 coordinates ATP; the sequence is GISGGQDS. A Mg(2+)-binding site is contributed by D53. Residue R141 participates in deamido-NAD(+) binding. T161 is a binding site for ATP. E166 serves as a coordination point for Mg(2+). Deamido-NAD(+)-binding residues include K174 and D181. ATP-binding residues include K190 and T212. Deamido-NAD(+) is bound at residue 261-262; the sequence is HK.

The protein belongs to the NAD synthetase family. As to quaternary structure, homodimer.

It catalyses the reaction deamido-NAD(+) + NH4(+) + ATP = AMP + diphosphate + NAD(+) + H(+). It participates in cofactor biosynthesis; NAD(+) biosynthesis; NAD(+) from deamido-NAD(+) (ammonia route): step 1/1. Catalyzes the ATP-dependent amidation of deamido-NAD to form NAD. Uses ammonia as a nitrogen source. The sequence is that of NH(3)-dependent NAD(+) synthetase from Lactiplantibacillus plantarum (strain ATCC BAA-793 / NCIMB 8826 / WCFS1) (Lactobacillus plantarum).